A 282-amino-acid polypeptide reads, in one-letter code: uncharacterized protein (282 aa).

Residues 205–277 (LAQQRRVYAQ…DELQNKARDA (73 aa)) are a coiled coil.

This is an uncharacterized protein from Treponema pallidum (strain Nichols).